Here is a 190-residue protein sequence, read N- to C-terminus: Potassium-transporting ATPase KdpC subunit (190 aa).

A helical membrane pass occupies residues 13-33 (IGFLLLTLVCGVLYPGVVTVF).

Belongs to the KdpC family. As to quaternary structure, the system is composed of three essential subunits: KdpA, KdpB and KdpC.

The protein localises to the cell membrane. In terms of biological role, part of the high-affinity ATP-driven potassium transport (or Kdp) system, which catalyzes the hydrolysis of ATP coupled with the electrogenic transport of potassium into the cytoplasm. This subunit acts as a catalytic chaperone that increases the ATP-binding affinity of the ATP-hydrolyzing subunit KdpB by the formation of a transient KdpB/KdpC/ATP ternary complex. The protein is Potassium-transporting ATPase KdpC subunit of Listeria monocytogenes serovar 1/2a (strain ATCC BAA-679 / EGD-e).